The following is a 124-amino-acid chain: Ribulose bisphosphate carboxylase small subunit (124 aa).

It belongs to the RuBisCO small chain family. Heterohexadecamer of 8 large and 8 small subunits.

RuBisCO catalyzes two reactions: the carboxylation of D-ribulose 1,5-bisphosphate, the primary event in carbon dioxide fixation, as well as the oxidative fragmentation of the pentose substrate. Both reactions occur simultaneously and in competition at the same active site. Although the small subunit is not catalytic it is essential for maximal activity. The sequence is that of Ribulose bisphosphate carboxylase small subunit from Hydrogenophilus thermoluteolus (Pseudomonas hydrogenothermophila).